The following is a 269-amino-acid chain: 4-hydroxy-tetrahydrodipicolinate reductase (269 aa).

Residues G8 to M13, E34, G98 to T100, and A122 to M125 each bind NAD(+). The Proton donor/acceptor role is filled by H155. (S)-2,3,4,5-tetrahydrodipicolinate is bound at residue H156. The active-site Proton donor is the K159. G165 to T166 provides a ligand contact to (S)-2,3,4,5-tetrahydrodipicolinate.

The protein belongs to the DapB family.

It is found in the cytoplasm. The enzyme catalyses (S)-2,3,4,5-tetrahydrodipicolinate + NAD(+) + H2O = (2S,4S)-4-hydroxy-2,3,4,5-tetrahydrodipicolinate + NADH + H(+). It carries out the reaction (S)-2,3,4,5-tetrahydrodipicolinate + NADP(+) + H2O = (2S,4S)-4-hydroxy-2,3,4,5-tetrahydrodipicolinate + NADPH + H(+). Its pathway is amino-acid biosynthesis; L-lysine biosynthesis via DAP pathway; (S)-tetrahydrodipicolinate from L-aspartate: step 4/4. Its function is as follows. Catalyzes the conversion of 4-hydroxy-tetrahydrodipicolinate (HTPA) to tetrahydrodipicolinate. This Desulfotalea psychrophila (strain LSv54 / DSM 12343) protein is 4-hydroxy-tetrahydrodipicolinate reductase.